Reading from the N-terminus, the 344-residue chain is Methionine import ATP-binding protein MetN (344 aa).

The ABC transporter domain occupies 2 to 241; it reads IEIKSVNKVF…PKTELAHQFI (240 aa). 38-45 contributes to the ATP binding site; that stretch reads GSSGAGKS.

This sequence belongs to the ABC transporter superfamily. Methionine importer (TC 3.A.1.24) family. As to quaternary structure, the complex is composed of two ATP-binding proteins (MetN), two transmembrane proteins (MetI) and a solute-binding protein (MetQ).

The protein localises to the cell inner membrane. The enzyme catalyses L-methionine(out) + ATP + H2O = L-methionine(in) + ADP + phosphate + H(+). It carries out the reaction D-methionine(out) + ATP + H2O = D-methionine(in) + ADP + phosphate + H(+). Its function is as follows. Part of the ABC transporter complex MetNIQ involved in methionine import. Responsible for energy coupling to the transport system. This is Methionine import ATP-binding protein MetN from Vibrio cholerae serotype O1 (strain ATCC 39315 / El Tor Inaba N16961).